A 35-amino-acid polypeptide reads, in one-letter code: Potassium channel toxin alpha-KTx 6.1 (35 aa).

4 disulfides stabilise this stretch: C4/C25, C10/C30, C14/C32, and C20/C35.

The protein belongs to the short scorpion toxin superfamily. Potassium channel inhibitor family. Alpha-KTx 06 subfamily. Expressed by the venom gland.

It is found in the secreted. In terms of biological role, potently and reversibly inhibits the insect voltage-gated Shaker (Sh) potassium channel (isoform alpha (B)), the mammalian voltage-gated potassium channels Kv1.2/KCNA2 (IC(50)=0.44 nM), and the calcium-activated potassium channel KCa2.3/KCNN3 (Kd=330 nM). Its effect on Kv1.3/KCNA3 is controversial, since this channel is voltage-independently inhibited in PubMed:9464266, but is not affected in PubMed:10931199. Furthermore, this toxin competes with apamin (a small conductance calcium-activated potassium channel inhibitor) for binding to rat brain synaptosomes. The polypeptide is Potassium channel toxin alpha-KTx 6.1 (Pandinus imperator (Emperor scorpion)).